We begin with the raw amino-acid sequence, 159 residues long: 3-hydroxyacyl-[acyl-carrier-protein] dehydratase FabZ (159 aa).

Histidine 58 is a catalytic residue.

It belongs to the thioester dehydratase family. FabZ subfamily.

Its subcellular location is the cytoplasm. The enzyme catalyses a (3R)-hydroxyacyl-[ACP] = a (2E)-enoyl-[ACP] + H2O. Functionally, involved in unsaturated fatty acids biosynthesis. Catalyzes the dehydration of short chain beta-hydroxyacyl-ACPs and long chain saturated and unsaturated beta-hydroxyacyl-ACPs. The protein is 3-hydroxyacyl-[acyl-carrier-protein] dehydratase FabZ of Helicobacter pylori (strain ATCC 700392 / 26695) (Campylobacter pylori).